The primary structure comprises 563 residues: NAD-dependent malic enzyme (563 aa).

Tyrosine 101 (proton donor) is an active-site residue. An NAD(+)-binding site is contributed by arginine 154. Lysine 172 functions as the Proton acceptor in the catalytic mechanism. A divalent metal cation-binding residues include glutamate 243, aspartate 244, and aspartate 267. Residues aspartate 267 and asparagine 416 each coordinate NAD(+).

It belongs to the malic enzymes family. In terms of assembly, homotetramer. Mg(2+) serves as cofactor. Requires Mn(2+) as cofactor.

It carries out the reaction (S)-malate + NAD(+) = pyruvate + CO2 + NADH. It catalyses the reaction oxaloacetate + H(+) = pyruvate + CO2. In Pseudomonas savastanoi pv. phaseolicola (strain 1448A / Race 6) (Pseudomonas syringae pv. phaseolicola (strain 1448A / Race 6)), this protein is NAD-dependent malic enzyme.